A 497-amino-acid polypeptide reads, in one-letter code: Acetyltransferase adrJ (497 aa).

Catalysis depends on proton acceptor residues His174 and Asp422. Residues 430–451 (SSAQSSSQNTQKKGKPSYVNGV) are disordered.

This sequence belongs to the plant acyltransferase family. In terms of assembly, monomer.

It participates in secondary metabolite biosynthesis; terpenoid biosynthesis. In terms of biological role, acetyltransferase; part of the gene cluster that mediates the biosynthesis of andrastins, meroterpenoid compounds that exhibit inhibitory activity against ras farnesyltransferase, suggesting that they could be promising leads for antitumor agents. The first step of the pathway is the synthesis of 3,5-dimethylorsellinic acid (DMOA) by the polyketide synthase adrD via condensation of one acetyl-CoA starter unit with 3 malonyl-CoA units and 2 methylations. DMAO is then converted to farnesyl-DMAO by the prenyltransferase adrG. The methyltransferase adrK catalyzes the methylation of the carboxyl group of farnesyl-DMAO to farnesyl-DMAO methyl ester which is further converted to epoxyfarnesyl-DMAO methyl ester by the FAD-dependent monooxygenase adrH. The terpene cyclase adrI then catalyzes the carbon skeletal rearrangement to generate the andrastin E, the first compound in the pathway having the andrastin scaffold, with the tetracyclic ring system. The post-cyclization tailoring enzymes adrF, adrE, adrJ, and adrA, are involved in the conversion of andrastin E into andrastin A. The short chain dehydrogenase adrF is responsible for the oxidation of the C-3 a hydroxyl group of andrastin E to yield the corresponding ketone, andrastin D. The ketoreductase adrE stereoselectively reduces the carbonyl moiety to reverse the stereochemistry of the C-3 position to yield andrastin F. The acetyltransferase adrJ is the acetyltransferase that attaches the acetyl group to the C-3 hydroxyl group of andrastin F to yield andrastin C. Finally, the cytochrome P450 monooxygenase adrA catalyzes two sequential oxidation reactions of the C-23 methyl group, to generate the corresponding alcohol andrastin B, and aldehyde andrastin A. The chain is Acetyltransferase adrJ from Penicillium rubens (strain ATCC 28089 / DSM 1075 / NRRL 1951 / Wisconsin 54-1255) (Penicillium chrysogenum).